A 367-amino-acid polypeptide reads, in one-letter code: 2-aminoethylphosphonate--pyruvate transaminase (367 aa).

The residue at position 194 (Lys-194) is an N6-(pyridoxal phosphate)lysine.

It belongs to the class-V pyridoxal-phosphate-dependent aminotransferase family. PhnW subfamily. Homodimer. Requires pyridoxal 5'-phosphate as cofactor.

The enzyme catalyses (2-aminoethyl)phosphonate + pyruvate = phosphonoacetaldehyde + L-alanine. Its function is as follows. Involved in phosphonate degradation. This chain is 2-aminoethylphosphonate--pyruvate transaminase, found in Salmonella agona (strain SL483).